The primary structure comprises 213 residues: Large ribosomal subunit protein uL1 (213 aa).

Belongs to the universal ribosomal protein uL1 family. In terms of assembly, part of the 50S ribosomal subunit.

Its function is as follows. Binds directly to 23S rRNA. Probably involved in E site tRNA release. Functionally, protein L1 is also a translational repressor protein, it controls the translation of its operon by binding to its mRNA. In Nanoarchaeum equitans (strain Kin4-M), this protein is Large ribosomal subunit protein uL1.